Consider the following 397-residue polypeptide: 3-ketoacyl-CoA thiolase, mitochondrial (397 aa).

The transit peptide at 1-16 (MALLRGVFVVAAKRTP) directs the protein to the mitochondrion; not cleaved. Lys-25 is subject to N6-acetyllysine; alternate. The residue at position 25 (Lys-25) is an N6-succinyllysine; alternate. Lys-45 is modified (N6-succinyllysine). Cys-92 serves as the catalytic Acyl-thioester intermediate. Thr-119 bears the Phosphothreonine mark. Residue Ser-121 is modified to Phosphoserine. Tyr-127 is subject to Phosphotyrosine. Thr-136 carries the phosphothreonine modification. Lys-137 bears the N6-acetyllysine; alternate mark. Lys-137 is modified (N6-succinyllysine; alternate). Ser-140 carries the phosphoserine modification. Lys-143, Lys-171, Lys-191, and Lys-209 each carry N6-acetyllysine; alternate. 4 positions are modified to N6-succinyllysine; alternate: Lys-143, Lys-171, Lys-191, and Lys-209. Residues Lys-211, Lys-212, and Lys-214 each carry the N6-succinyllysine modification. Residues Arg-224 and Thr-227 each contribute to the CoA site. Lys-234 is subject to N6-acetyllysine; alternate. Position 234 is an N6-succinyllysine; alternate (Lys-234). The residue at position 240 (Lys-240) is an N6-succinyllysine. Residue Lys-241 is modified to N6-acetyllysine. Ser-251 contributes to the CoA binding site. Lys-269 and Lys-270 each carry N6-acetyllysine. Position 305 is an N6-acetyllysine; alternate (Lys-305). Lys-305 carries the N6-succinyllysine; alternate modification. Ser-310 carries the post-translational modification Phosphoserine. Residue Lys-312 is modified to N6-acetyllysine; alternate. Lys-312 bears the N6-succinyllysine; alternate mark. Phosphoserine is present on Ser-333. N6-acetyllysine is present on residues Lys-340 and Lys-375. Cys-382 (proton donor/acceptor) is an active-site residue.

The protein belongs to the thiolase-like superfamily. Thiolase family. Homotetramer. Interacts with BNIP3.

The protein localises to the mitochondrion. It carries out the reaction an acyl-CoA + acetyl-CoA = a 3-oxoacyl-CoA + CoA. It catalyses the reaction 2 acetyl-CoA = acetoacetyl-CoA + CoA. The catalysed reaction is acetyl-CoA + H2O = acetate + CoA + H(+). The enzyme catalyses propanoyl-CoA + H2O = propanoate + CoA + H(+). It carries out the reaction butanoyl-CoA + H2O = butanoate + CoA + H(+). It catalyses the reaction hexanoyl-CoA + H2O = hexanoate + CoA + H(+). The catalysed reaction is octanoyl-CoA + H2O = octanoate + CoA + H(+). The enzyme catalyses decanoyl-CoA + H2O = decanoate + CoA + H(+). It carries out the reaction dodecanoyl-CoA + H2O = dodecanoate + CoA + H(+). It catalyses the reaction tetradecanoyl-CoA + H2O = tetradecanoate + CoA + H(+). The catalysed reaction is hexadecanoyl-CoA + H2O = hexadecanoate + CoA + H(+). It participates in lipid metabolism; fatty acid beta-oxidation. Functionally, in the production of energy from fats, this is one of the enzymes that catalyzes the last step of the mitochondrial beta-oxidation pathway, an aerobic process breaking down fatty acids into acetyl-CoA. Using free coenzyme A/CoA, catalyzes the thiolytic cleavage of medium- to long-chain unbranched 3-oxoacyl-CoAs into acetyl-CoA and a fatty acyl-CoA shortened by two carbon atoms. Also catalyzes the condensation of two acetyl-CoA molecules into acetoacetyl-CoA and could be involved in the production of ketone bodies. Also displays hydrolase activity on various fatty acyl-CoAs. Thereby, could be responsible for the production of acetate in a side reaction to beta-oxidation. Abolishes BNIP3-mediated apoptosis and mitochondrial damage. The chain is 3-ketoacyl-CoA thiolase, mitochondrial (ACAA2) from Pongo abelii (Sumatran orangutan).